A 101-amino-acid polypeptide reads, in one-letter code: MNIPLGEKVMLDIVAMFRQYSGDDGRMDMPGLVNLMKENFPNFLSGCEKSDMDYLSNALEKKDDNKDKKVNYSEFLSLLGDITIDHHKIMHGVAPCSGGSQ.

2 EF-hand domains span residues 13–48 (IVAM…SGCE) and 50–85 (SDMD…ITID). Ca(2+)-binding residues include D63, N65, D67, K69, and E74. Zn(2+) contacts are provided by H87 and H91.

This sequence belongs to the S-100 family.

This Homo sapiens (Human) protein is Protein S100-A7-like 2 (S100A7L2).